A 253-amino-acid chain; its full sequence is Indole-3-glycerol phosphate synthase (253 aa).

This sequence belongs to the TrpC family.

It carries out the reaction 1-(2-carboxyphenylamino)-1-deoxy-D-ribulose 5-phosphate + H(+) = (1S,2R)-1-C-(indol-3-yl)glycerol 3-phosphate + CO2 + H2O. Its pathway is amino-acid biosynthesis; L-tryptophan biosynthesis; L-tryptophan from chorismate: step 4/5. The polypeptide is Indole-3-glycerol phosphate synthase (Bacillus cereus (strain AH187)).